We begin with the raw amino-acid sequence, 148 residues long: Nucleoside diphosphate kinase 1 (148 aa).

Residues Lys-9, Phe-57, Arg-85, Thr-91, Arg-102, and Asn-112 each contribute to the ATP site. The active-site Pros-phosphohistidine intermediate is the His-115.

This sequence belongs to the NDK family. The cofactor is Mg(2+). The N-terminus is blocked.

The enzyme catalyses a 2'-deoxyribonucleoside 5'-diphosphate + ATP = a 2'-deoxyribonucleoside 5'-triphosphate + ADP. It carries out the reaction a ribonucleoside 5'-diphosphate + ATP = a ribonucleoside 5'-triphosphate + ADP. Functionally, major role in the synthesis of nucleoside triphosphates other than ATP. The ATP gamma phosphate is transferred to the NDP beta phosphate via a ping-pong mechanism, using a phosphorylated active-site intermediate. The sequence is that of Nucleoside diphosphate kinase 1 (NDPK1) from Spinacia oleracea (Spinach).